The chain runs to 507 residues: UDP-N-acetylhexosamine pyrophosphorylase-like protein 1 (507 aa).

Residues 111–114 (LAGG) carry the Substrate binding motif. UTP contacts are provided by residues 111–114 (LAGG), Lys-125, Gln-199, and Gly-225. Asn-226 contributes to the substrate binding site. Asp-256 contacts UTP. The Substrate binding motif lies at 306 to 307 (EY). Residue Lys-380 coordinates UTP. Lys-410 contributes to the substrate binding site.

This sequence belongs to the UDPGP type 1 family.

In Mus musculus (Mouse), this protein is UDP-N-acetylhexosamine pyrophosphorylase-like protein 1 (Uap1l1).